The sequence spans 414 residues: Histidine--tRNA ligase (414 aa).

This sequence belongs to the class-II aminoacyl-tRNA synthetase family. Homodimer.

The protein resides in the cytoplasm. The catalysed reaction is tRNA(His) + L-histidine + ATP = L-histidyl-tRNA(His) + AMP + diphosphate + H(+). The chain is Histidine--tRNA ligase from Mycoplasma capricolum subsp. capricolum (strain California kid / ATCC 27343 / NCTC 10154).